The chain runs to 158 residues: Adenosine 5'-monophosphoramidase HNT1 (158 aa).

Residues 26–129 (IFCKIIKSEI…IPKRDEKSGL (104 aa)) enclose the HIT domain. Residues 51–52 (DI), Asn103, 109–111 (HQE), and 116–118 (HFH) contribute to the AMP site. Positions 114 to 118 (HVHFH) match the Histidine triad motif motif. Catalysis depends on His116, which acts as the Tele-AMP-histidine intermediate.

This sequence belongs to the HINT family. Homodimer. Interacts with KIN28. It depends on Mg(2+) as a cofactor.

The catalysed reaction is adenosine 5'-phosphoramidate + H2O = AMP + NH4(+). Functionally, hydrolyzes adenosine 5'-monophosphoramidate substrates such as AMP-morpholidate, AMP-N-alanine methyl ester, AMP-alpha-acetyl lysine methyl ester and AMP-NH2. Plays a role in the regulation of kinase KIN28 function. Essential for growth on galactose media at elevated temperatures. The sequence is that of Adenosine 5'-monophosphoramidase HNT1 from Saccharomyces cerevisiae (strain ATCC 204508 / S288c) (Baker's yeast).